A 730-amino-acid polypeptide reads, in one-letter code: Actin filament-associated protein 1 (730 aa).

An N-acetylmethionine modification is found at Met1. The interval 47–91 (KDHAQKQETANSLPAPPQMPLPEIPQPWLPPDSGPPPLPTSSLPE) is disordered. A compositionally biased stretch (pro residues) spans 60–85 (PAPPQMPLPEIPQPWLPPDSGPPPLP). The short motif at 71 to 74 (PQPW) is the SH3-binding element. An SH2-binding 1 motif is present at residues 94–97 (YEEA). The disordered stretch occupies residues 119–140 (SSSYESYDEEEEDGKGKKTRHQ). The 97-residue stretch at 153–249 (DAKICAFLLR…WLKVIKEAYS (97 aa)) folds into the PH 1 domain. The disordered stretch occupies residues 252–292 (SGPVDSECPPPPSSPVHKAELEKKLSSERPSSDGEGVVENG). Residues 268-283 (HKAELEKKLSSERPSS) are compositionally biased toward basic and acidic residues. 2 positions are modified to phosphoserine: Ser282 and Ser283. In terms of domain architecture, PH 2 spans 347 to 441 (DVPTCGYLNV…WIGILLAETG (95 aa)). The short motif at 451 to 456 (YDYIDV) is the SH2-binding 2 element. Positions 512–537 (KGKKPPVASNGVTGKGKTLSSQPKKA) are disordered. At Ser548 the chain carries Phosphoserine. Positions 557–648 (KNRVEADAKR…VKESLKKALA (92 aa)) form a coiled coil. The interval 594 to 637 (DLRAAIEVNAGRKPQAILEEKLKQLEEECRQKEAERVSLELELT) is interaction with F-actin. 3 positions are modified to phosphoserine: Ser664, Ser665, and Ser668. Thr675 carries the phosphothreonine modification. Residues Ser679 and Ser687 each carry the phosphoserine modification.

Monomer and homomultimer. Interacts via its C-terminus with F-actin; probably involving AFAP1 multimers. Interacts with activated SRC SH3-SH2 domains. Interacts via its PH 1 domain with PRKCA, PRKCB and PRKCI. In terms of processing, phosphorylated on tyrosine residues by SRC. Low expression in normal breast epithelial cell line MCF-10A and in tumorigenic breast cancer cell lines MCF-7, T-47D and ZR-75-1. Highly expressed in the invasive breast cancer cell lines MDA-MB-231 and MDA-MB-435. Overexpressed in prostate carcinoma.

The protein resides in the cytoplasm. It localises to the cytoskeleton. The protein localises to the stress fiber. Its function is as follows. Can cross-link actin filaments into both network and bundle structures. May modulate changes in actin filament integrity and induce lamellipodia formation. May function as an adapter molecule that links other proteins, such as SRC and PKC to the actin cytoskeleton. Seems to play a role in the development and progression of prostate adenocarcinoma by regulating cell-matrix adhesions and migration in the cancer cells. The polypeptide is Actin filament-associated protein 1 (AFAP1) (Homo sapiens (Human)).